A 129-amino-acid chain; its full sequence is Thioredoxin-like 3-3 (129 aa).

The segment covering 1–10 has biased composition (basic and acidic residues); it reads MEEGEAKKTG. The segment at 1–30 is disordered; that stretch reads MEEGEAKKTGLEGTGLSLPGSSHGNLRSAG. One can recognise a Thioredoxin domain in the interval 7–129; the sequence is KKTGLEGTGL…RLHDRLWLHS (123 aa). The segment covering 19–30 has biased composition (polar residues); the sequence is PGSSHGNLRSAG. Catalysis depends on nucleophile residues Cys-58 and Cys-61. The cysteines at positions 58 and 61 are disulfide-linked.

The protein belongs to the thioredoxin family.

Functionally, probable thiol-disulfide oxidoreductase that may participate in various redox reactions. This Oryza sativa subsp. japonica (Rice) protein is Thioredoxin-like 3-3.